The following is a 261-amino-acid chain: Receptor expression-enhancing protein 4 (261 aa).

The next 2 helical transmembrane spans lie at 1–21 (MVSW…YPAY) and 35–55 (YVRW…ETFT). The tract at residues 177–261 (ELHRRPIGYP…KKPAQSEPEN (85 aa)) is disordered. Residues 191–202 (ADSDSMDERWSD) are compositionally biased toward basic and acidic residues.

The protein belongs to the DP1 family. As to quaternary structure, interacts with microtubules. As to expression, during gastrulation, expressed on the dorsal side of the embryo and then in the neural plate and neural tube. At tailbud stages, expressed in the somites. Expressed in the neural tube later in development.

It localises to the endoplasmic reticulum membrane. Functionally, microtubule-binding protein required to ensure proper cell division and nuclear envelope reassembly by sequestering the endoplasmic reticulum away from chromosomes during mitosis. Probably acts by clearing the endoplasmic reticulum membrane from metaphase chromosomes. May play a role in the maintenance of both the nervous system and the musculature. The polypeptide is Receptor expression-enhancing protein 4 (reep4) (Xenopus tropicalis (Western clawed frog)).